Reading from the N-terminus, the 216-residue chain is RNA pyrophosphohydrolase (216 aa).

Residues 6–149 (GFRPNVGIIL…KRDVYQLALT (144 aa)) form the Nudix hydrolase domain. The short motif at 38-59 (GGIKYGETPMQAMYRELHEETG) is the Nudix box element. The interval 159-191 (AQRTDKSRGPRAPRYPRVANGHAASETPAAIDT) is disordered.

This sequence belongs to the Nudix hydrolase family. RppH subfamily. A divalent metal cation is required as a cofactor.

Its function is as follows. Accelerates the degradation of transcripts by removing pyrophosphate from the 5'-end of triphosphorylated RNA, leading to a more labile monophosphorylated state that can stimulate subsequent ribonuclease cleavage. The polypeptide is RNA pyrophosphohydrolase (Burkholderia pseudomallei (strain 668)).